Reading from the N-terminus, the 440-residue chain is 3-phosphoshikimate 1-carboxyvinyltransferase (440 aa).

3 residues coordinate 3-phosphoshikimate: K25, S26, and R30. K25 lines the phosphoenolpyruvate pocket. Phosphoenolpyruvate-binding residues include G96 and R124. 3-phosphoshikimate contacts are provided by S168, Q169, D310, and K337. Position 169 (Q169) interacts with phosphoenolpyruvate. D310 functions as the Proton acceptor in the catalytic mechanism. Positions 341, 382, and 409 each coordinate phosphoenolpyruvate.

The protein belongs to the EPSP synthase family. Monomer.

The protein localises to the cytoplasm. It catalyses the reaction 3-phosphoshikimate + phosphoenolpyruvate = 5-O-(1-carboxyvinyl)-3-phosphoshikimate + phosphate. The protein operates within metabolic intermediate biosynthesis; chorismate biosynthesis; chorismate from D-erythrose 4-phosphate and phosphoenolpyruvate: step 6/7. Catalyzes the transfer of the enolpyruvyl moiety of phosphoenolpyruvate (PEP) to the 5-hydroxyl of shikimate-3-phosphate (S3P) to produce enolpyruvyl shikimate-3-phosphate and inorganic phosphate. The chain is 3-phosphoshikimate 1-carboxyvinyltransferase from Chlamydia trachomatis serovar A (strain ATCC VR-571B / DSM 19440 / HAR-13).